Reading from the N-terminus, the 647-residue chain is MFQNNPLLAQLKQQLHSQTLRVEGLVKGTEKGFGFLEVDGQKSYFIPPPHMKKVMHGDRVTAAIHTDKEREIAEPETLIEPFLNRFVGRIQKKENDNRLWITPDHPLLKDAIPCRPTNQVTHPFQHGDWAVAEMRHHPLKGSRGFHAEITGYITESDNHYAPWWVTLTRHNLERDAPAMTADCQMNDGDLERIDLTSLDFVTIDSATTEDMDDALHIAKQDDGSLKLSIAIADPTAYIAAGSELDQIAHQRAFTNYLPGFNIPMLPRDLSENLCSLRPNARRPALVCQVSILEDGQLGDDIAFFSTWVESKAKLVYDEVSDWLEKTGTWEPASEAIKTQITLLKEMSDRRNQWRHQNALIFKDRPDYRFILDENGYVLDIVVEQRRTANRIVEEAMITSNLCAAKILRDKLGFGIYNVHMGFEPLQIEQVVELLQENDIDAKTEELLTLDGFCKLRRELDKKPTQFLDSRIRRFQTFAEIKPEPGPHFGLGFDAYATWTSPIRKYSDMINHRLLKAIIQKTDVEQPSEETCLQLAERRRLNRMAERDVGDWLYARFLQPHAGTEQRFTAEIIDITRGGLRVRLADNGAVAFIPAPFLHAVRDELQCSQETGTVIIKGEVAYQLNDIIDVRIDEVRMETRNIVARPTA.

An RNB domain is found at 192–519 (RIDLTSLDFV…NHRLLKAIIQ (328 aa)). One can recognise an S1 motif domain in the interval 564-646 (EQRFTAEIID…ETRNIVARPT (83 aa)).

This sequence belongs to the RNR ribonuclease family. RNase II subfamily.

The protein localises to the cytoplasm. The enzyme catalyses Exonucleolytic cleavage in the 3'- to 5'-direction to yield nucleoside 5'-phosphates.. Functionally, involved in mRNA degradation. Hydrolyzes single-stranded polyribonucleotides processively in the 3' to 5' direction. The sequence is that of Exoribonuclease 2 from Photorhabdus laumondii subsp. laumondii (strain DSM 15139 / CIP 105565 / TT01) (Photorhabdus luminescens subsp. laumondii).